The chain runs to 237 residues: Protein GrpE (237 aa).

The disordered stretch occupies residues 1 to 65 (MTDSYKLPDN…DAREDDRDPT (65 aa)). The segment covering 55-65 (VDAREDDRDPT) has biased composition (basic and acidic residues).

This sequence belongs to the GrpE family. As to quaternary structure, homodimer.

The protein localises to the cytoplasm. Functionally, participates actively in the response to hyperosmotic and heat shock by preventing the aggregation of stress-denatured proteins, in association with DnaK and GrpE. It is the nucleotide exchange factor for DnaK and may function as a thermosensor. Unfolded proteins bind initially to DnaJ; upon interaction with the DnaJ-bound protein, DnaK hydrolyzes its bound ATP, resulting in the formation of a stable complex. GrpE releases ADP from DnaK; ATP binding to DnaK triggers the release of the substrate protein, thus completing the reaction cycle. Several rounds of ATP-dependent interactions between DnaJ, DnaK and GrpE are required for fully efficient folding. The sequence is that of Protein GrpE from Corynebacterium efficiens (strain DSM 44549 / YS-314 / AJ 12310 / JCM 11189 / NBRC 100395).